A 336-amino-acid chain; its full sequence is Vacuolar protein sorting-associated protein 26B (336 aa).

3 positions are modified to phosphoserine: serine 302, serine 304, and serine 319.

This sequence belongs to the VPS26 family. Component of the heterotrimeric retromer cargo-selective complex (CSC), also described as vacuolar protein sorting subcomplex (VPS), formed by VPS26 (VPS26A or VPS26B), VPS29 and VPS35. The CSC has a highly elongated structure with VPS26 and VPS29 binding independently at opposite distal ends of VPS35 as central platform. The CSC is believed to associate with variable sorting nexins to form functionally distinct retromer complex variants. The originally described SNX-BAR retromer is a pentamer containing the CSC and a heterodimeric membrane-deforming subcomplex formed between SNX1 or SNX2 and SNX5 or SNX6 (also called SNX-BAR subcomplex); the respective CSC and SNX-BAR subcomplexes associate with low affinity. The CSC associates with SNX3 to form a SNX3-retromer complex. The CSC associates with SNX27, the WASH complex and the SNX-BAR subcomplex to form the SNX27-retromer complex. Interacts with VPS29, VPS35, TBC1D5, GOLPH3, SNX27.

It localises to the cytoplasm. The protein localises to the membrane. Its subcellular location is the early endosome. It is found in the late endosome. Acts as a component of the retromer cargo-selective complex (CSC). The CSC is believed to be the core functional component of retromer or respective retromer complex variants acting to prevent missorting of selected transmembrane cargo proteins into the lysosomal degradation pathway. The recruitment of the CSC to the endosomal membrane involves RAB7A and SNX3. The SNX-BAR retromer mediates retrograde transport of cargo proteins from endosomes to the trans-Golgi network (TGN) and is involved in endosome-to-plasma membrane transport for cargo protein recycling. The SNX3-retromer mediates the retrograde transport of WLS distinct from the SNX-BAR retromer pathway. The SNX27-retromer is believed to be involved in endosome-to-plasma membrane trafficking and recycling of a broad spectrum of cargo proteins. The CSC seems to act as recruitment hub for other proteins, such as the WASH complex and TBC1D5. May be involved in retrograde transport of SORT1 but not of IGF2R. Acts redundantly with VSP26A in SNX-27 mediated endocytic recycling of SLC2A1/GLUT1. The sequence is that of Vacuolar protein sorting-associated protein 26B (VPS26B) from Pongo abelii (Sumatran orangutan).